The chain runs to 134 residues: MRHYEVVLIVHPDQSDQVVGMVERYIKLVQDNNGMVHRLEDWGRRQLAYPINKIHKAHYVLFNIECDGATLEELEELFRYNDAIIRSLVVRRDDAITEPSQLAKSADEKRARKAPRSENFDNDQDDESNDDSDE.

The interval 99–134 (PSQLAKSADEKRARKAPRSENFDNDQDDESNDDSDE) is disordered. The span at 105-119 (SADEKRARKAPRSEN) shows a compositional bias: basic and acidic residues. The segment covering 120–134 (FDNDQDDESNDDSDE) has biased composition (acidic residues).

The protein belongs to the bacterial ribosomal protein bS6 family.

In terms of biological role, binds together with bS18 to 16S ribosomal RNA. The polypeptide is Small ribosomal subunit protein bS6 (Psychrobacter sp. (strain PRwf-1)).